The primary structure comprises 113 residues: Large ribosomal subunit protein uL22 (113 aa).

This sequence belongs to the universal ribosomal protein uL22 family. As to quaternary structure, part of the 50S ribosomal subunit.

This protein binds specifically to 23S rRNA; its binding is stimulated by other ribosomal proteins, e.g. L4, L17, and L20. It is important during the early stages of 50S assembly. It makes multiple contacts with different domains of the 23S rRNA in the assembled 50S subunit and ribosome. Its function is as follows. The globular domain of the protein is located near the polypeptide exit tunnel on the outside of the subunit, while an extended beta-hairpin is found that lines the wall of the exit tunnel in the center of the 70S ribosome. This is Large ribosomal subunit protein uL22 from Roseiflexus sp. (strain RS-1).